The chain runs to 163 residues: NADH-quinone oxidoreductase subunit I (163 aa).

4Fe-4S ferredoxin-type domains are found at residues 55–84 (RRYPSGEERCIACKLCEAICPAQAITIEAE) and 94–123 (TRYDIDMVKCIYCGLCQEACPVDAIVEGPN). Residues cysteine 64, cysteine 67, cysteine 70, cysteine 74, cysteine 103, cysteine 106, cysteine 109, and cysteine 113 each coordinate [4Fe-4S] cluster.

The protein belongs to the complex I 23 kDa subunit family. As to quaternary structure, NDH-1 is composed of 14 different subunits. Subunits NuoA, H, J, K, L, M, N constitute the membrane sector of the complex. Requires [4Fe-4S] cluster as cofactor.

It is found in the cell inner membrane. The catalysed reaction is a quinone + NADH + 5 H(+)(in) = a quinol + NAD(+) + 4 H(+)(out). NDH-1 shuttles electrons from NADH, via FMN and iron-sulfur (Fe-S) centers, to quinones in the respiratory chain. The immediate electron acceptor for the enzyme in this species is believed to be ubiquinone. Couples the redox reaction to proton translocation (for every two electrons transferred, four hydrogen ions are translocated across the cytoplasmic membrane), and thus conserves the redox energy in a proton gradient. The polypeptide is NADH-quinone oxidoreductase subunit I (Caulobacter vibrioides (strain ATCC 19089 / CIP 103742 / CB 15) (Caulobacter crescentus)).